A 424-amino-acid polypeptide reads, in one-letter code: Glutamate-1-semialdehyde 2,1-aminomutase (424 aa).

An N6-(pyridoxal phosphate)lysine modification is found at Lys263.

Belongs to the class-III pyridoxal-phosphate-dependent aminotransferase family. HemL subfamily. In terms of assembly, homodimer. It depends on pyridoxal 5'-phosphate as a cofactor.

It is found in the cytoplasm. The catalysed reaction is (S)-4-amino-5-oxopentanoate = 5-aminolevulinate. It participates in porphyrin-containing compound metabolism; protoporphyrin-IX biosynthesis; 5-aminolevulinate from L-glutamyl-tRNA(Glu): step 2/2. The sequence is that of Glutamate-1-semialdehyde 2,1-aminomutase from Campylobacter jejuni (strain RM1221).